The primary structure comprises 314 residues: UDP-N-acetylenolpyruvoylglucosamine reductase (314 aa).

An FAD-binding PCMH-type domain is found at 25-191 (KIGGPADLFA…VRVGMELRWG (167 aa)). Arg-170 is a catalytic residue. Ser-220 serves as the catalytic Proton donor. Glu-291 is a catalytic residue.

Belongs to the MurB family. It depends on FAD as a cofactor.

It localises to the cytoplasm. The enzyme catalyses UDP-N-acetyl-alpha-D-muramate + NADP(+) = UDP-N-acetyl-3-O-(1-carboxyvinyl)-alpha-D-glucosamine + NADPH + H(+). The protein operates within cell wall biogenesis; peptidoglycan biosynthesis. Cell wall formation. The polypeptide is UDP-N-acetylenolpyruvoylglucosamine reductase (Heliobacterium modesticaldum (strain ATCC 51547 / Ice1)).